Consider the following 91-residue polypeptide: Probable Fe(2+)-trafficking protein (91 aa).

Belongs to the Fe(2+)-trafficking protein family.

Functionally, could be a mediator in iron transactions between iron acquisition and iron-requiring processes, such as synthesis and/or repair of Fe-S clusters in biosynthetic enzymes. The sequence is that of Probable Fe(2+)-trafficking protein from Burkholderia thailandensis (strain ATCC 700388 / DSM 13276 / CCUG 48851 / CIP 106301 / E264).